We begin with the raw amino-acid sequence, 187 residues long: Endoribonuclease YbeY (187 aa).

Residues histidine 148, histidine 152, and histidine 158 each contribute to the Zn(2+) site.

Belongs to the endoribonuclease YbeY family. Zn(2+) serves as cofactor.

The protein resides in the cytoplasm. In terms of biological role, single strand-specific metallo-endoribonuclease involved in late-stage 70S ribosome quality control and in maturation of the 3' terminus of the 16S rRNA. The chain is Endoribonuclease YbeY from Ralstonia nicotianae (strain ATCC BAA-1114 / GMI1000) (Ralstonia solanacearum).